The sequence spans 361 residues: Deoxyribonuclease (361 aa).

Positions 1–24 are cleaved as a signal peptide; the sequence is MMHLLRRGAFAILLIVLLPSAALA. His-149 is an active-site residue.

Belongs to the DNase I family. Requires Mg(2+) as cofactor. It depends on Ca(2+) as a cofactor.

The protein resides in the secreted. Functionally, DNA nuclease able to digest short and long DNA substrate. Is resistant to ionic strength and thus active at high salt concentration. This chain is Deoxyribonuclease, found in Thioalkalivibrio sp. (strain K90mix).